Here is a 500-residue protein sequence, read N- to C-terminus: Na(+)/H(+) antiporter NhaB (500 aa).

12 helical membrane-spanning segments follow: residues 28-50 (FLLS…VLVG), 68-88 (GGLL…ALYA), 98-118 (LLLM…LLLF), 121-141 (LLLG…LAAL), 145-165 (FLDA…FFAV), 205-225 (LLMH…VGEP), 244-264 (QVAP…VALE), 301-318 (ALLV…GLAL), 350-370 (FQEA…VAVI), 394-414 (MLFI…VATI), 449-469 (VATP…IAPL), and 477-497 (MVWM…WAVS).

It belongs to the NhaB Na(+)/H(+) (TC 2.A.34) antiporter family.

The protein resides in the cell inner membrane. It carries out the reaction 2 Na(+)(in) + 3 H(+)(out) = 2 Na(+)(out) + 3 H(+)(in). Its function is as follows. Na(+)/H(+) antiporter that extrudes sodium in exchange for external protons. This Pseudomonas paraeruginosa (strain DSM 24068 / PA7) (Pseudomonas aeruginosa (strain PA7)) protein is Na(+)/H(+) antiporter NhaB.